The chain runs to 225 residues: MLKQPEMILIDVDGTLVDSVPDLTFCTDTMMERLGLPLRGETKVRQWVGNGVERLIKRALVDNMEGEPEEDLYQKAETIFLALYADNTSKRSHLYPGVNEGLAWLKSQGYRVGCVTNKAAQFTYPLLTELGIIDYFEIVISGDTLPEKKPHPAPLLHAASHFGIAPEKALMIGDSISDVKAARAANFQIVCLSYGYNHGVDIRDSQPDSVIDSLIEIKNLLSQAA.

Residue D11 is the Nucleophile of the active site. 3 residues coordinate Mg(2+): D11, D13, and D174.

It belongs to the HAD-like hydrolase superfamily. CbbY/CbbZ/Gph/YieH family. The cofactor is Mg(2+).

It catalyses the reaction 2-phosphoglycolate + H2O = glycolate + phosphate. The protein operates within organic acid metabolism; glycolate biosynthesis; glycolate from 2-phosphoglycolate: step 1/1. Specifically catalyzes the dephosphorylation of 2-phosphoglycolate. Is involved in the dissimilation of the intracellular 2-phosphoglycolate formed during the DNA repair of 3'-phosphoglycolate ends, a major class of DNA lesions induced by oxidative stress. This is Phosphoglycolate phosphatase from Nitrosococcus oceani (strain ATCC 19707 / BCRC 17464 / JCM 30415 / NCIMB 11848 / C-107).